A 490-amino-acid polypeptide reads, in one-letter code: uncharacterized protein (490 aa).

A compositionally biased stretch (low complexity) spans 370 to 385 (FSMKRPSSSSSSLSGS). Residues 370-406 (FSMKRPSSSSSSLSGSWHGDTENSVKQSLASPSEASL) are disordered. Positions 391 to 406 (ENSVKQSLASPSEASL) are enriched in polar residues.

It localises to the cytoplasm. It is found in the nucleus. This is an uncharacterized protein from Schizosaccharomyces pombe (strain 972 / ATCC 24843) (Fission yeast).